A 547-amino-acid chain; its full sequence is Serine/threonine-protein kinase RIO2 (547 aa).

A Protein kinase domain is found at 97-273 (VGNQMGVGKE…RDVKCIREFF (177 aa)). ATP is bound at residue lysine 123. The active-site Proton acceptor is aspartate 228. Phosphoserine occurs at positions 332, 337, 350, 362, 385, and 390. Residues 352 to 385 (LEKEADPADESGGSWCCSSTDSKQIKDGGLPEES) form a disordered region. The short motif at 399–408 (AVEEMERQVL) is the Nuclear export signal element. The tract at residues 404-445 (ERQVLPHRSVTEFSEESRRTENDGQPGQRSPAGSEDCDDEPP) is disordered. Serine 412, serine 417, serine 433, serine 437, and serine 543 each carry phosphoserine.

This sequence belongs to the protein kinase superfamily. RIO-type Ser/Thr kinase family. As to quaternary structure, associated with late 40S pre-ribosomal particles. Interacts with PLK1 (via its N-terminus). It depends on Mg(2+) as a cofactor. In terms of processing, autophosphorylated (in vitro). Phosphorylation affects the timing of the metaphase-anaphase transition.

The protein localises to the cytoplasm. It catalyses the reaction L-seryl-[protein] + ATP = O-phospho-L-seryl-[protein] + ADP + H(+). It carries out the reaction L-threonyl-[protein] + ATP = O-phospho-L-threonyl-[protein] + ADP + H(+). Functionally, serine/threonine-protein kinase involved in the final steps of cytoplasmic maturation of the 40S ribosomal subunit. Involved in export of the 40S pre-ribosome particles (pre-40S) from the nucleus to the cytoplasm. Its kinase activity is required for the release of NOB1, PNO1 and LTV1 from the late pre-40S and the processing of 18S-E pre-rRNA to the mature 18S rRNA. May regulate the timing of the metaphase-anaphase transition during mitotic progression, and its phosphorylation, may regulate this function. In Mus musculus (Mouse), this protein is Serine/threonine-protein kinase RIO2 (Riok2).